A 166-amino-acid polypeptide reads, in one-letter code: Large ribosomal subunit protein uL10 (166 aa).

It belongs to the universal ribosomal protein uL10 family. In terms of assembly, part of the ribosomal stalk of the 50S ribosomal subunit. The N-terminus interacts with L11 and the large rRNA to form the base of the stalk. The C-terminus forms an elongated spine to which L12 dimers bind in a sequential fashion forming a multimeric L10(L12)X complex.

Functionally, forms part of the ribosomal stalk, playing a central role in the interaction of the ribosome with GTP-bound translation factors. The sequence is that of Large ribosomal subunit protein uL10 from Streptococcus agalactiae serotype III (strain NEM316).